The following is a 209-amino-acid chain: uncharacterized protein (209 aa).

It localises to the plastid. Its subcellular location is the chloroplast. This is an uncharacterized protein from Porphyra purpurea (Red seaweed).